The sequence spans 570 residues: Glycine--tRNA ligase (570 aa).

Substrate is bound by residues arginine 99 and glutamate 165. Residues 197–199 (RNE), 207–212 (LRLREF), 324–325 (EC), and 443–446 (GIDR) contribute to the ATP site. 212 to 216 (FSQAE) contributes to the substrate binding site. 439–443 (EPSFG) is a binding site for substrate.

This sequence belongs to the class-II aminoacyl-tRNA synthetase family.

It localises to the cytoplasm. It catalyses the reaction tRNA(Gly) + glycine + ATP = glycyl-tRNA(Gly) + AMP + diphosphate. Catalyzes the attachment of glycine to tRNA(Gly). The polypeptide is Glycine--tRNA ligase (Thermococcus sibiricus (strain DSM 12597 / MM 739)).